The sequence spans 257 residues: Hydroxypyruvate/pyruvate aldolase (257 aa).

Histidine 48 acts as the Proton acceptor in catalysis. 2 residues coordinate a divalent metal cation: glutamate 152 and aspartate 178.

The protein belongs to the HpcH/HpaI aldolase family. A divalent metal cation serves as cofactor.

It carries out the reaction D-glyceraldehyde + 3-hydroxypyruvate = 2-dehydro-D-gluconate. The enzyme catalyses D-glyceraldehyde + pyruvate = 2-dehydro-3-deoxy-L-galactonate. It catalyses the reaction 2-dehydro-3-deoxy-D-gluconate = D-glyceraldehyde + pyruvate. Aldolase which can catalyze in vitro the aldolisation reaction between hydroxypyruvate (HPA) or pyruvate (PA) and D-glyceraldehyde (D-GA). The condensation of hydroxypyruvate and D-glyceraldehyde produces 2-dehydro-D-gluconate as the major product. The condensation of pyruvate and D-glyceraldehyde produces 2-dehydro-3-deoxy-L-galactonate as the major product and 2-dehydro-3-deoxy-D-gluconate. This Roseovarius nubinhibens (strain ATCC BAA-591 / DSM 15170 / ISM) protein is Hydroxypyruvate/pyruvate aldolase.